Reading from the N-terminus, the 218-residue chain is 25 kDa calcium-binding protein (218 aa).

EF-hand domains are found at residues 24–59 (GAKTVARRIFENYDKGRKGRIENTDCVPMITEAYKS), 66–101 (PSSDDIKAYHRVLDRNGDGIVTYQDIEELCIRYLTG), 128–163 (AKLDVARRLFKRYDKDGSGQLQDDEIAGLLKDTYAE), and 171–206 (PTKEDVKIWLQMADTNSDGSVSLEEYEDLIIKSLQK). Residues Asp37, Arg43, Asp48, Asp79, Asn81, Asp83, Asp90, Asp141, Asp143, Ser145, Gln147, Glu152, Asp184, Asn186, Asp188, Ser190, and Glu195 each contribute to the Ca(2+) site.

Expected to play a crucial role in calcium-dependent regulation of ciliary movement. The sequence is that of 25 kDa calcium-binding protein from Tetrahymena thermophila.